Reading from the N-terminus, the 240-residue chain is 2,3,4,5-tetrahydropyridine-2,6-dicarboxylate N-acetyltransferase (240 aa).

Belongs to the transferase hexapeptide repeat family. DapH subfamily.

It carries out the reaction (S)-2,3,4,5-tetrahydrodipicolinate + acetyl-CoA + H2O = L-2-acetamido-6-oxoheptanedioate + CoA. It functions in the pathway amino-acid biosynthesis; L-lysine biosynthesis via DAP pathway; LL-2,6-diaminopimelate from (S)-tetrahydrodipicolinate (acetylase route): step 1/3. Catalyzes the transfer of an acetyl group from acetyl-CoA to tetrahydrodipicolinate. This is 2,3,4,5-tetrahydropyridine-2,6-dicarboxylate N-acetyltransferase from Bacillus anthracis (strain A0248).